A 406-amino-acid chain; its full sequence is Anthranilate 1,2-dioxygenase system ferredoxin--NAD(+) reductase component (406 aa).

5–37 (PFVIVGAGHAARRTAEALRARDADAPIVMIGAE) is a binding site for FAD. Position 152–161 (152–161 (GGGFIGLEVA)) interacts with NAD(+).

Belongs to the FAD-dependent oxidoreductase family. Part of a multicomponent enzyme system composed of a reductase (AndAa), a ferredoxin (AndAb) and a two-subunit oxygenase component (AndAc and AndAd). FAD serves as cofactor.

It carries out the reaction 2 reduced [2Fe-2S]-[ferredoxin] + NAD(+) + H(+) = 2 oxidized [2Fe-2S]-[ferredoxin] + NADH. It functions in the pathway aromatic compound metabolism; anthranilate degradation via hydroxylation; catechol from anthranilate: step 1/1. In terms of biological role, part of the multicomponent anthranilate dioxygenase, that converts anthranilate to catechol. Probably transfers electrons from ferredoxin (AndAb) to NADH. The sequence is that of Anthranilate 1,2-dioxygenase system ferredoxin--NAD(+) reductase component from Burkholderia cepacia (Pseudomonas cepacia).